A 357-amino-acid polypeptide reads, in one-letter code: 3'(2'),5'-bisphosphate nucleotidase (357 aa).

The active-site Proton acceptor is the Asp-49. Residues Glu-72, Asp-142, Ile-144, and Asp-145 each coordinate Mg(2+). Thr-147 functions as the Proton acceptor in the catalytic mechanism. Residues Thr-147, His-241, Ser-264, Lys-267, Arg-281, and Asp-294 each contribute to the adenosine 3',5'-bisphosphate site. Residues His-241, Ser-264, Lys-267, Arg-281, and Asp-294 each coordinate AMP. Asp-294 lines the Mg(2+) pocket.

It belongs to the inositol monophosphatase superfamily. Requires Mg(2+) as cofactor.

Its subcellular location is the cytoplasm. It is found in the nucleus. The catalysed reaction is 3'-phosphoadenylyl sulfate + H2O = adenosine 5'-phosphosulfate + phosphate. It carries out the reaction adenosine 3',5'-bisphosphate + H2O = AMP + phosphate. The enzyme catalyses adenosine 2',5'-bisphosphate + H2O = AMP + phosphate. With respect to regulation, phosphatase activity is very sensitive to lithium and moderately sensitive to sodium. The inhibitory effects of lithium and sodium are overcome by high concentrations of potassium. Lithium exerts its inhibitory action by blocking the products of the PAP hydrolysis at the active site. Functionally, phosphatase that converts adenosine 3'-phosphate 5'-phosphosulfate (PAPS) to adenosine 5'-phosphosulfate (APS) and 3'(2')-phosphoadenosine 5'-phosphate (PAP) to AMP. May regulate the flux of sulfur in the sulfur-activation pathway by converting PAPS to APS. Involved in salt tolerance. Confers resistance to lithium. Shows no activity on inositol mono- and diphosphates, 3'-AMP, AMP, nicotinamide adenine dinucleotide phosphate (NADP), and p-nitrophenylphosphate. The sequence is that of 3'(2'),5'-bisphosphate nucleotidase (MET22) from Saccharomyces cerevisiae (strain ATCC 204508 / S288c) (Baker's yeast).